Here is a 197-residue protein sequence, read N- to C-terminus: MPETEKIAEVFEELTGSKISKNFLDHRKIFLWGPVTDESSKDLVGKLLYLEMKDPGKKITFYINSPGGVVTSGMTVFDTIKMISSPVHTVCMGMAASMGSVLLAAGTKGERSIWPNGKVMIHQPSIGGQIVAPATDLKIHAEEILKTKTKLNQILADACGHPISKLEEDTDRDYYMDAEEAIKYGIVDKLATKIDFN.

Residue Ser97 is the Nucleophile of the active site. The active site involves His122.

It belongs to the peptidase S14 family. In terms of assembly, fourteen ClpP subunits assemble into 2 heptameric rings which stack back to back to give a disk-like structure with a central cavity, resembling the structure of eukaryotic proteasomes.

The protein resides in the cytoplasm. The catalysed reaction is Hydrolysis of proteins to small peptides in the presence of ATP and magnesium. alpha-casein is the usual test substrate. In the absence of ATP, only oligopeptides shorter than five residues are hydrolyzed (such as succinyl-Leu-Tyr-|-NHMec, and Leu-Tyr-Leu-|-Tyr-Trp, in which cleavage of the -Tyr-|-Leu- and -Tyr-|-Trp bonds also occurs).. Cleaves peptides in various proteins in a process that requires ATP hydrolysis. Has a chymotrypsin-like activity. Plays a major role in the degradation of misfolded proteins. This Leptospira interrogans serogroup Icterohaemorrhagiae serovar copenhageni (strain Fiocruz L1-130) protein is ATP-dependent Clp protease proteolytic subunit 2.